The chain runs to 268 residues: Indole-3-glycerol phosphate synthase (268 aa).

Belongs to the TrpC family.

The enzyme catalyses 1-(2-carboxyphenylamino)-1-deoxy-D-ribulose 5-phosphate + H(+) = (1S,2R)-1-C-(indol-3-yl)glycerol 3-phosphate + CO2 + H2O. The protein operates within amino-acid biosynthesis; L-tryptophan biosynthesis; L-tryptophan from chorismate: step 4/5. The sequence is that of Indole-3-glycerol phosphate synthase from Acinetobacter baumannii (strain SDF).